We begin with the raw amino-acid sequence, 164 residues long: MRLTSKGRYAVTAMLDVALNSEAGPVPLADISERQGISLSYLEQLFSRLRKNGLVSSVRGPGGGYLLGKDAGSIAVGEVISAVDESVDATRCQGKGGCQGGDKCLTHALWRDLSDRLTGFLNNITLGELVNNQEVLDVSGRQHTHDAPRASSRAQDAIDVKLRA.

The region spanning 2-131 (RLTSKGRYAV…NNITLGELVN (130 aa)) is the HTH rrf2-type domain. The H-T-H motif DNA-binding region spans 28-51 (LADISERQGISLSYLEQLFSRLRK). 3 residues coordinate [2Fe-2S] cluster: cysteine 92, cysteine 98, and cysteine 104.

[2Fe-2S] cluster serves as cofactor.

Its function is as follows. Regulates the transcription of several operons and genes involved in the biogenesis of Fe-S clusters and Fe-S-containing proteins. The polypeptide is HTH-type transcriptional regulator IscR (Salmonella agona (strain SL483)).